The following is a 212-amino-acid chain: MKRYFVTGTDTDCGKTFVTNQLVNYFSNSAAIKPIASGCEYSENQLVNSDALLHQQQNHLSLEIINPWRFRLPVSPHLSAREDGASIDVHKVADYCLNLQLNDIKKLFIEGAGGLMVPLNEQDTWLDFLKLTRIPVILVVGMKLGCINHTLLTQEVLEINKIKCQGWIANCLDQDMLMLDENINTLEAKLKYPLLARTNYGGKISDICLSSL.

Residue 12–17 participates in ATP binding; it reads DCGKTF. T16 contributes to the Mg(2+) binding site. K33 is an active-site residue. S37 lines the substrate pocket. ATP contacts are provided by residues D50, 110–113, and 170–171; these read EGAG and NC. Mg(2+)-binding residues include D50 and E110.

This sequence belongs to the dethiobiotin synthetase family. Homodimer. Mg(2+) serves as cofactor.

It is found in the cytoplasm. The catalysed reaction is (7R,8S)-7,8-diammoniononanoate + CO2 + ATP = (4R,5S)-dethiobiotin + ADP + phosphate + 3 H(+). The protein operates within cofactor biosynthesis; biotin biosynthesis; biotin from 7,8-diaminononanoate: step 1/2. Catalyzes a mechanistically unusual reaction, the ATP-dependent insertion of CO2 between the N7 and N8 nitrogen atoms of 7,8-diaminopelargonic acid (DAPA, also called 7,8-diammoniononanoate) to form a ureido ring. The sequence is that of ATP-dependent dethiobiotin synthetase BioD from Legionella pneumophila (strain Paris).